Here is a 137-residue protein sequence, read N- to C-terminus: Small ribosomal subunit protein uS12 (137 aa).

Residues 1-57 (MPTINQLVRKPRQSKIKKSDSPALNKGFNSKKKKFTDLNSPQKRGVCTRVGTMTPRK) form a disordered region. 3-methylthioaspartic acid is present on D102. The segment at 118–137 (SGVDGRRQGRSLYGTKKPKN) is disordered.

Belongs to the universal ribosomal protein uS12 family. Part of the 30S ribosomal subunit. Contacts proteins S8 and S17. May interact with IF1 in the 30S initiation complex.

In terms of biological role, with S4 and S5 plays an important role in translational accuracy. Functionally, interacts with and stabilizes bases of the 16S rRNA that are involved in tRNA selection in the A site and with the mRNA backbone. Located at the interface of the 30S and 50S subunits, it traverses the body of the 30S subunit contacting proteins on the other side and probably holding the rRNA structure together. The combined cluster of proteins S8, S12 and S17 appears to hold together the shoulder and platform of the 30S subunit. This Staphylococcus aureus (strain COL) protein is Small ribosomal subunit protein uS12.